The following is a 252-amino-acid chain: UPF0714 protein YndL (252 aa).

Residues 33 to 51 (IVKLLMIFMVFTPISSIYA) form a helical membrane-spanning segment.

The protein belongs to the UPF0714 family.

Its subcellular location is the cell membrane. The protein is UPF0714 protein YndL (yndL) of Bacillus subtilis (strain 168).